We begin with the raw amino-acid sequence, 427 residues long: Trigger factor (427 aa).

One can recognise a PPIase FKBP-type domain in the interval 163-248; it reads GDTVILDFEG…LHEIKTKEVP (86 aa).

This sequence belongs to the FKBP-type PPIase family. Tig subfamily.

It localises to the cytoplasm. It catalyses the reaction [protein]-peptidylproline (omega=180) = [protein]-peptidylproline (omega=0). Functionally, involved in protein export. Acts as a chaperone by maintaining the newly synthesized protein in an open conformation. Functions as a peptidyl-prolyl cis-trans isomerase. This chain is Trigger factor, found in Listeria welshimeri serovar 6b (strain ATCC 35897 / DSM 20650 / CCUG 15529 / CIP 8149 / NCTC 11857 / SLCC 5334 / V8).